The primary structure comprises 359 residues: DNA replication and repair protein RecF (359 aa).

Position 30-37 (30-37 (GKNGIGKT)) interacts with ATP.

This sequence belongs to the RecF family.

Its subcellular location is the cytoplasm. In terms of biological role, the RecF protein is involved in DNA metabolism; it is required for DNA replication and normal SOS inducibility. RecF binds preferentially to single-stranded, linear DNA. It also seems to bind ATP. This Flavobacterium johnsoniae (strain ATCC 17061 / DSM 2064 / JCM 8514 / BCRC 14874 / CCUG 350202 / NBRC 14942 / NCIMB 11054 / UW101) (Cytophaga johnsonae) protein is DNA replication and repair protein RecF.